Reading from the N-terminus, the 158-residue chain is 6,7-dimethyl-8-ribityllumazine synthase (158 aa).

Residues F22, 57-59, and 81-83 each bind 5-amino-6-(D-ribitylamino)uracil; these read AVE and AVI. (2S)-2-hydroxy-3-oxobutyl phosphate is bound at residue 86-87; the sequence is GT. Residue H89 is the Proton donor of the active site. F114 is a binding site for 5-amino-6-(D-ribitylamino)uracil. R128 provides a ligand contact to (2S)-2-hydroxy-3-oxobutyl phosphate.

It belongs to the DMRL synthase family. As to quaternary structure, forms an icosahedral capsid composed of 60 subunits, arranged as a dodecamer of pentamers.

The enzyme catalyses (2S)-2-hydroxy-3-oxobutyl phosphate + 5-amino-6-(D-ribitylamino)uracil = 6,7-dimethyl-8-(1-D-ribityl)lumazine + phosphate + 2 H2O + H(+). It participates in cofactor biosynthesis; riboflavin biosynthesis; riboflavin from 2-hydroxy-3-oxobutyl phosphate and 5-amino-6-(D-ribitylamino)uracil: step 1/2. Functionally, catalyzes the formation of 6,7-dimethyl-8-ribityllumazine by condensation of 5-amino-6-(D-ribitylamino)uracil with 3,4-dihydroxy-2-butanone 4-phosphate. This is the penultimate step in the biosynthesis of riboflavin. The chain is 6,7-dimethyl-8-ribityllumazine synthase from Shewanella oneidensis (strain ATCC 700550 / JCM 31522 / CIP 106686 / LMG 19005 / NCIMB 14063 / MR-1).